The chain runs to 431 residues: Serine/threonine-protein kinase SSN3 (431 aa).

The 329-residue stretch at 27-355 folds into the Protein kinase domain; sequence YQIIGYIAAG…ADNALVHPYF (329 aa). Residues 33–41 and Lys59 each bind ATP; that span reads IAAGTYGKV. Asp174 acts as the Proton acceptor in catalysis. The disordered stretch occupies residues 397 to 431; the sequence is RHGGAYDDQHNNSNNNTNNSLNANNANNVPRKRAR. Over residues 407-424 the composition is skewed to low complexity; it reads NNSNNNTNNSLNANNANN.

Belongs to the protein kinase superfamily. CMGC Ser/Thr protein kinase family. CDC2/CDKX subfamily. As to quaternary structure, component of the srb8-11 complex, a regulatory module of the Mediator complex. It depends on Mg(2+) as a cofactor.

The protein resides in the nucleus. The catalysed reaction is L-seryl-[protein] + ATP = O-phospho-L-seryl-[protein] + ADP + H(+). It catalyses the reaction L-threonyl-[protein] + ATP = O-phospho-L-threonyl-[protein] + ADP + H(+). The enzyme catalyses [DNA-directed RNA polymerase] + ATP = phospho-[DNA-directed RNA polymerase] + ADP + H(+). Its function is as follows. Component of the srb8-11 complex. The srb8-11 complex is a regulatory module of the Mediator complex which is itself dependent transcription. The srb8-11 complex may be involved in the transcriptional repression of a subset of genes regulated by Mediator. It may inhibit the association of the Mediator complex with RNA polymerase II to form the holoenzyme complex. The srb8-11 complex phosphorylates the C-terminal domain (CTD) of the largest subunit of RNA polymerase II. The sequence is that of Serine/threonine-protein kinase SSN3 (SSN3) from Scheffersomyces stipitis (strain ATCC 58785 / CBS 6054 / NBRC 10063 / NRRL Y-11545) (Yeast).